The primary structure comprises 683 residues: Bifunctional lysine-specific demethylase and histidyl-hydroxylase NO66 (683 aa).

The span at 1 to 26 (MHKASTSSANRANFQGNHKTQKSPNN) shows a compositional bias: polar residues. Disordered stretches follow at residues 1-162 (MHKA…SPIQ) and 179-208 (AAGA…AAKS). The span at 54-65 (LTKEQKERRKMM) shows a compositional bias: basic and acidic residues. Residues 85–94 (IDTSASTSNK) are compositionally biased toward polar residues. The segment covering 95 to 108 (GKSKAARPTDRKRR) has biased composition (basic residues). The segment covering 116–125 (PADANNNNTK) has biased composition (low complexity). At serine 152 the chain carries Phosphoserine. Position 158 is a phosphothreonine (threonine 158). Position 159 is a phosphoserine (serine 159). A compositionally biased stretch (low complexity) spans 179-189 (AAGASGASGPA). The JmjC domain maps to 341-480 (NPSTYLVGLR…NLLEKLMPIV (140 aa)). Fe cation contacts are provided by histidine 381, aspartate 383, and histidine 446.

It belongs to the ROX family. NO66 subfamily. Fe(2+) is required as a cofactor.

The protein localises to the nucleus. The enzyme catalyses N(6),N(6)-dimethyl-L-lysyl(36)-[histone H3] + 2 2-oxoglutarate + 2 O2 = L-lysyl(36)-[histone H3] + 2 formaldehyde + 2 succinate + 2 CO2. Its function is as follows. Oxygenase that can act as both a histone lysine demethylase and a ribosomal histidine hydroxylase. Specifically demethylates 'Lys-4' (H3K4me) and 'Lys-36' (H3K36me) of histone H3, thereby playing a central role in histone code. The chain is Bifunctional lysine-specific demethylase and histidyl-hydroxylase NO66 from Drosophila yakuba (Fruit fly).